Consider the following 240-residue polypeptide: Carboxy-S-adenosyl-L-methionine synthase (240 aa).

S-adenosyl-L-methionine contacts are provided by residues tyrosine 35, 61–63, 86–87, 112–113, and arginine 194; these read GCS, DN, and DI.

Belongs to the class I-like SAM-binding methyltransferase superfamily. Cx-SAM synthase family. As to quaternary structure, homodimer.

It catalyses the reaction prephenate + S-adenosyl-L-methionine = carboxy-S-adenosyl-L-methionine + 3-phenylpyruvate + H2O. In terms of biological role, catalyzes the conversion of S-adenosyl-L-methionine (SAM) to carboxy-S-adenosyl-L-methionine (Cx-SAM). The protein is Carboxy-S-adenosyl-L-methionine synthase of Wolinella succinogenes (strain ATCC 29543 / DSM 1740 / CCUG 13145 / JCM 31913 / LMG 7466 / NCTC 11488 / FDC 602W) (Vibrio succinogenes).